Consider the following 142-residue polypeptide: Small ribosomal subunit protein bS18m (142 aa).

It belongs to the bacterial ribosomal protein bS18 family. Component of the mitochondrial small ribosomal subunit (mt-SSU). Mature mammalian 55S mitochondrial ribosomes consist of a small (28S) and a large (39S) subunit. The 28S small subunit contains a 12S ribosomal RNA (12S mt-rRNA) and 30 different proteins. The 39S large subunit contains a 16S rRNA (16S mt-rRNA), a copy of mitochondrial valine transfer RNA (mt-tRNA(Val)), which plays an integral structural role, and 52 different proteins. bS18m has a zinc binding site.

The protein resides in the mitochondrion. The sequence is that of Small ribosomal subunit protein bS18m (MRPS18C) from Homo sapiens (Human).